The chain runs to 359 residues: Mannonate dehydratase (359 aa).

It belongs to the mannonate dehydratase family. Fe(2+) is required as a cofactor. Requires Mn(2+) as cofactor.

The catalysed reaction is D-mannonate = 2-dehydro-3-deoxy-D-gluconate + H2O. It participates in carbohydrate metabolism; pentose and glucuronate interconversion. Its function is as follows. Catalyzes the dehydration of D-mannonate. The sequence is that of Mannonate dehydratase from Moorella thermoacetica (strain ATCC 39073 / JCM 9320).